A 494-amino-acid polypeptide reads, in one-letter code: UPF0371 protein SEQ_1471 (494 aa).

Belongs to the UPF0371 family.

This Streptococcus equi subsp. equi (strain 4047) protein is UPF0371 protein SEQ_1471.